The chain runs to 309 residues: UDP-N-acetylenolpyruvoylglucosamine reductase (309 aa).

Residues 34 to 199 (RVGGPAQVLF…TSARLRGTPA (166 aa)) enclose the FAD-binding PCMH-type domain. The active site involves arginine 179. The active-site Proton donor is serine 228. Glutamate 298 is an active-site residue.

The protein belongs to the MurB family. The cofactor is FAD.

The protein localises to the cytoplasm. It catalyses the reaction UDP-N-acetyl-alpha-D-muramate + NADP(+) = UDP-N-acetyl-3-O-(1-carboxyvinyl)-alpha-D-glucosamine + NADPH + H(+). It functions in the pathway cell wall biogenesis; peptidoglycan biosynthesis. In terms of biological role, cell wall formation. This Rhodopseudomonas palustris (strain ATCC BAA-98 / CGA009) protein is UDP-N-acetylenolpyruvoylglucosamine reductase.